The sequence spans 466 residues: Ribulose bisphosphate carboxylase large chain (466 aa).

The residue at position 5 (lysine 5) is an N6,N6,N6-trimethyllysine. 2 residues coordinate substrate: asparagine 114 and threonine 164. The Proton acceptor role is filled by lysine 166. Lysine 168 is a substrate binding site. 3 residues coordinate Mg(2+): lysine 192, aspartate 194, and glutamate 195. Lysine 192 carries the N6-carboxylysine modification. The active-site Proton acceptor is the histidine 285. Substrate is bound by residues arginine 286, histidine 318, and serine 370.

Belongs to the RuBisCO large chain family. Type I subfamily. Heterohexadecamer of 8 large chains and 8 small chains; disulfide-linked. The disulfide link is formed within the large subunit homodimers. The cofactor is Mg(2+). In terms of processing, the disulfide bond which can form in the large chain dimeric partners within the hexadecamer appears to be associated with oxidative stress and protein turnover.

It localises to the plastid. The protein resides in the chloroplast. The enzyme catalyses 2 (2R)-3-phosphoglycerate + 2 H(+) = D-ribulose 1,5-bisphosphate + CO2 + H2O. It carries out the reaction D-ribulose 1,5-bisphosphate + O2 = 2-phosphoglycolate + (2R)-3-phosphoglycerate + 2 H(+). In terms of biological role, ruBisCO catalyzes two reactions: the carboxylation of D-ribulose 1,5-bisphosphate, the primary event in carbon dioxide fixation, as well as the oxidative fragmentation of the pentose substrate in the photorespiration process. Both reactions occur simultaneously and in competition at the same active site. This Betula nigra (River birch) protein is Ribulose bisphosphate carboxylase large chain.